A 238-amino-acid polypeptide reads, in one-letter code: EKC/KEOPS complex subunit SPAP27G11.07c (238 aa).

The region spanning 20-238 (EKKLTVVKQG…MRGRKRTMIG (219 aa)) is the Protein kinase domain. Residues 26-34 (VKQGAEAIT) and K48 contribute to the ATP site. Residue D148 is the Proton acceptor of the active site.

Belongs to the protein kinase superfamily. BUD32 family. As to quaternary structure, component of the EKC/KEOPS complex composed of at least SPAP27G11.07c/BUD32, cgi121, gon7, pgp2 and SPAC4H3.13/PCC1; the whole complex dimerizes.

It localises to the cytoplasm. Its subcellular location is the nucleus. It is found in the chromosome. The protein localises to the telomere. It catalyses the reaction L-seryl-[protein] + ATP = O-phospho-L-seryl-[protein] + ADP + H(+). The enzyme catalyses L-threonyl-[protein] + ATP = O-phospho-L-threonyl-[protein] + ADP + H(+). Functionally, component of the EKC/KEOPS complex that is required for the formation of a threonylcarbamoyl group on adenosine at position 37 (t(6)A37) in tRNAs that read codons beginning with adenine. The complex is probably involved in the transfer of the threonylcarbamoyl moiety of threonylcarbamoyl-AMP (TC-AMP) to the N6 group of A37. BUD32 has ATPase activity in the context of the EKC/KEOPS complex and likely plays a supporting role to the catalytic subunit KAE1. The EKC/KEOPS complex also promotes both telomere uncapping and telomere elongation. The complex is required for efficient recruitment of transcriptional coactivators. The protein is EKC/KEOPS complex subunit SPAP27G11.07c of Schizosaccharomyces pombe (strain 972 / ATCC 24843) (Fission yeast).